Reading from the N-terminus, the 329-residue chain is Protein Brevis radix-like 4 (329 aa).

The segment at 12–37 (SGTSRHHGQQRRGGSPPPRGRTTSVY) is disordered. The BRX 1 domain occupies 86 to 142 (REWVAQVEPGVQITFVSLAGGGGNDLKRIRFSREMYDKWQAQKWWGENNERIMELYN). A disordered region spans residues 151–263 (LPTPPRSDDG…TTSCSSRDEV (113 aa)). Low complexity-rich tracts occupy residues 222 to 236 (SNPS…QQPQ) and 243 to 252 (AAASDAMDAA). Residues 253-263 (RTTSCSSRDEV) are compositionally biased toward polar residues. The BRX 2 domain occupies 274 to 329 (TEWVIQDEPGVYITVRELADGTRELRRVRFSRERFAELNAKLWWEENKERIQAQYL).

Belongs to the BRX family.

It is found in the nucleus. The chain is Protein Brevis radix-like 4 (BRXL4) from Oryza sativa subsp. japonica (Rice).